Here is a 398-residue protein sequence, read N- to C-terminus: S-adenosylmethionine decarboxylase proenzyme (398 aa).

Catalysis depends on residues Glu-18 and Glu-21. The Schiff-base intermediate with substrate; via pyruvic acid role is filled by Ser-78. A Pyruvic acid (Ser); by autocatalysis modification is found at Ser-78. Cys-92 (proton donor; for catalytic activity) is an active-site residue. Catalysis depends on proton acceptor; for processing activity residues Ser-243 and His-256.

The protein belongs to the eukaryotic AdoMetDC family. The cofactor is pyruvate. In terms of processing, is synthesized initially as an inactive proenzyme. Formation of the active enzyme involves a self-maturation process in which the active site pyruvoyl group is generated from an internal serine residue via an autocatalytic post-translational modification. Two non-identical subunits are generated from the proenzyme in this reaction, and the pyruvate is formed at the N-terminus of the alpha chain, which is derived from the carboxyl end of the proenzyme. The post-translation cleavage follows an unusual pathway, termed non-hydrolytic serinolysis, in which the side chain hydroxyl group of the serine supplies its oxygen atom to form the C-terminus of the beta chain, while the remainder of the serine residue undergoes an oxidative deamination to produce ammonia and the pyruvoyl group blocking the N-terminus of the alpha chain.

The catalysed reaction is S-adenosyl-L-methionine + H(+) = S-adenosyl 3-(methylsulfanyl)propylamine + CO2. It functions in the pathway amine and polyamine biosynthesis; S-adenosylmethioninamine biosynthesis; S-adenosylmethioninamine from S-adenosyl-L-methionine: step 1/1. The sequence is that of S-adenosylmethionine decarboxylase proenzyme (SAMDC) from Oryza sativa subsp. japonica (Rice).